The following is a 126-amino-acid chain: Small nuclear ribonucleoprotein Sm D3 (126 aa).

Ser-2 bears the N-acetylserine mark. Residues Val-5–Leu-77 enclose the Sm domain. Repeat copies occupy residues Arg-110 to Gly-111, Arg-112 to Gly-113, Arg-114 to Gly-115, Met-116 to Gly-117, and Arg-118 to Gly-119. Residues Arg-110–Gly-119 are 5 X 2 AA tandem repeats of [RM]-G; required for interaction with SMN1.

Belongs to the snRNP core protein family. In terms of assembly, core component of the spliceosomal U1, U2, U4 and U5 small nuclear ribonucleoproteins (snRNPs), the building blocks of the spliceosome. Most spliceosomal snRNPs contain a common set of Sm proteins, SNRPB, SNRPD1, SNRPD2, SNRPD3, SNRPE, SNRPF and SNRPG that assemble in a heptameric protein ring on the Sm site of the small nuclear RNA to form the core snRNP. Component of the U1 snRNP. The U1 snRNP is composed of the U1 snRNA and the 7 core Sm proteins SNRPB, SNRPD1, SNRPD2, SNRPD3, SNRPE, SNRPF and SNRPG, and at least three U1 snRNP-specific proteins SNRNP70/U1-70K, SNRPA/U1-A and SNRPC/U1-C. Component of the U4/U6-U5 tri-snRNP complex composed of the U4, U6 and U5 snRNAs and at least PRPF3, PRPF4, PRPF6, PRPF8, PRPF31, SNRNP200, TXNL4A, SNRNP40, SNRPB, SNRPD1, SNRPD2, SNRPD3, SNRPE, SNRPF, SNRPG, DDX23, CD2BP2, PPIH, SNU13, EFTUD2, SART1 and USP39, plus LSM2, LSM3, LSM4, LSM5, LSM6, LSM7 and LSM8. Component of the U7 snRNP complex, or U7 Sm protein core complex, that is composed of the U7 snRNA and at least LSM10, LSM11, SNRPB, SNRPD3, SNRPE, SNRPF and SNRPG; the complex does not contain SNRPD1 and SNRPD2. Component of the minor spliceosome, which splices U12-type introns. Part of the SMN-Sm complex that contains SMN1, GEMIN2/SIP1, DDX20/GEMIN3, GEMIN4, GEMIN5, GEMIN6, GEMIN7, GEMIN8, STRAP/UNRIP and the Sm proteins SNRPB, SNRPD1, SNRPD2, SNRPD3, SNRPE, SNRPF and SNRPG; catalyzes core snRNPs assembly. Forms a 6S pICln-Sm complex composed of CLNS1A/pICln, SNRPD1, SNRPD2, SNRPE, SNRPF and SNRPG; ring-like structure where CLNS1A/pICln mimics additional Sm proteins and which is unable to assemble into the core snRNP. Interacts (via C-terminus) with SMN1 (via Tudor domain); the interaction is direct. In terms of processing, methylated on arginine residues by PRMT5 and PRMT7; probable asymmetric dimethylation which is required for assembly and biogenesis of snRNPs.

It localises to the cytoplasm. The protein resides in the cytosol. The protein localises to the nucleus. Its function is as follows. Plays a role in pre-mRNA splicing as a core component of the spliceosomal U1, U2, U4 and U5 small nuclear ribonucleoproteins (snRNPs), the building blocks of the spliceosome. Component of both the pre-catalytic spliceosome B complex and activated spliceosome C complexes. As a component of the minor spliceosome, involved in the splicing of U12-type introns in pre-mRNAs. As part of the U7 snRNP it is involved in histone pre-mRNA 3'-end processing. The sequence is that of Small nuclear ribonucleoprotein Sm D3 (SNRPD3) from Homo sapiens (Human).